A 505-amino-acid polypeptide reads, in one-letter code: ATP synthase subunit beta (505 aa).

The segment at 1–25 (MAKAATPKETAAVKKPAAPKKAATA) is disordered. 183 to 190 (GGAGVGKT) contributes to the ATP binding site.

It belongs to the ATPase alpha/beta chains family. In terms of assembly, F-type ATPases have 2 components, CF(1) - the catalytic core - and CF(0) - the membrane proton channel. CF(1) has five subunits: alpha(3), beta(3), gamma(1), delta(1), epsilon(1). CF(0) has three main subunits: a(1), b(2) and c(9-12). The alpha and beta chains form an alternating ring which encloses part of the gamma chain. CF(1) is attached to CF(0) by a central stalk formed by the gamma and epsilon chains, while a peripheral stalk is formed by the delta and b chains.

Its subcellular location is the cell inner membrane. It catalyses the reaction ATP + H2O + 4 H(+)(in) = ADP + phosphate + 5 H(+)(out). Its function is as follows. Produces ATP from ADP in the presence of a proton gradient across the membrane. The catalytic sites are hosted primarily by the beta subunits. The protein is ATP synthase subunit beta of Sinorhizobium fredii (strain NBRC 101917 / NGR234).